The following is a 231-amino-acid chain: Lipoprotein-releasing system ATP-binding protein LolD 2 (231 aa).

The ABC transporter domain occupies 6–230 (VEARSLSKSF…DGRLVGQDPA (225 aa)). ATP is bound at residue 42–49 (GPSGSGKS).

It belongs to the ABC transporter superfamily. Lipoprotein translocase (TC 3.A.1.125) family. In terms of assembly, the complex is composed of two ATP-binding proteins (LolD) and two transmembrane proteins (LolC and LolE).

It is found in the cell inner membrane. In terms of biological role, part of the ABC transporter complex LolCDE involved in the translocation of mature outer membrane-directed lipoproteins, from the inner membrane to the periplasmic chaperone, LolA. Responsible for the formation of the LolA-lipoprotein complex in an ATP-dependent manner. The chain is Lipoprotein-releasing system ATP-binding protein LolD 2 from Rhodospirillum rubrum (strain ATCC 11170 / ATH 1.1.1 / DSM 467 / LMG 4362 / NCIMB 8255 / S1).